Consider the following 253-residue polypeptide: Imidazole glycerol phosphate synthase subunit HisF (253 aa).

Active-site residues include Asp-11 and Asp-130.

It belongs to the HisA/HisF family. Heterodimer of HisH and HisF.

The protein resides in the cytoplasm. The enzyme catalyses 5-[(5-phospho-1-deoxy-D-ribulos-1-ylimino)methylamino]-1-(5-phospho-beta-D-ribosyl)imidazole-4-carboxamide + L-glutamine = D-erythro-1-(imidazol-4-yl)glycerol 3-phosphate + 5-amino-1-(5-phospho-beta-D-ribosyl)imidazole-4-carboxamide + L-glutamate + H(+). It functions in the pathway amino-acid biosynthesis; L-histidine biosynthesis; L-histidine from 5-phospho-alpha-D-ribose 1-diphosphate: step 5/9. In terms of biological role, IGPS catalyzes the conversion of PRFAR and glutamine to IGP, AICAR and glutamate. The HisF subunit catalyzes the cyclization activity that produces IGP and AICAR from PRFAR using the ammonia provided by the HisH subunit. This Thermoanaerobacter sp. (strain X514) protein is Imidazole glycerol phosphate synthase subunit HisF.